Here is a 356-residue protein sequence, read N- to C-terminus: UDP-N-acetylglucosamine--N-acetylmuramyl-(pentapeptide) pyrophosphoryl-undecaprenol N-acetylglucosamine transferase (356 aa).

Residues 15 to 17, Asn-127, Arg-163, Ser-191, Ile-244, 263 to 268, and Gln-288 contribute to the UDP-N-acetyl-alpha-D-glucosamine site; these read TGG and ALTVSE.

It belongs to the glycosyltransferase 28 family. MurG subfamily.

It localises to the cell inner membrane. It carries out the reaction di-trans,octa-cis-undecaprenyl diphospho-N-acetyl-alpha-D-muramoyl-L-alanyl-D-glutamyl-meso-2,6-diaminopimeloyl-D-alanyl-D-alanine + UDP-N-acetyl-alpha-D-glucosamine = di-trans,octa-cis-undecaprenyl diphospho-[N-acetyl-alpha-D-glucosaminyl-(1-&gt;4)]-N-acetyl-alpha-D-muramoyl-L-alanyl-D-glutamyl-meso-2,6-diaminopimeloyl-D-alanyl-D-alanine + UDP + H(+). It participates in cell wall biogenesis; peptidoglycan biosynthesis. Its function is as follows. Cell wall formation. Catalyzes the transfer of a GlcNAc subunit on undecaprenyl-pyrophosphoryl-MurNAc-pentapeptide (lipid intermediate I) to form undecaprenyl-pyrophosphoryl-MurNAc-(pentapeptide)GlcNAc (lipid intermediate II). The protein is UDP-N-acetylglucosamine--N-acetylmuramyl-(pentapeptide) pyrophosphoryl-undecaprenol N-acetylglucosamine transferase of Klebsiella pneumoniae (strain 342).